The chain runs to 134 residues: ATP synthase epsilon chain (134 aa).

The protein belongs to the ATPase epsilon chain family. F-type ATPases have 2 components, CF(1) - the catalytic core - and CF(0) - the membrane proton channel. CF(1) has five subunits: alpha(3), beta(3), gamma(1), delta(1), epsilon(1). CF(0) has three main subunits: a, b and c.

It is found in the cell membrane. In terms of biological role, produces ATP from ADP in the presence of a proton gradient across the membrane. The chain is ATP synthase epsilon chain from Pelotomaculum thermopropionicum (strain DSM 13744 / JCM 10971 / SI).